Here is a 221-residue protein sequence, read N- to C-terminus: Adenylate kinase (221 aa).

G10–T15 is an ATP binding site. The NMP stretch occupies residues S30–V59. AMP-binding positions include T31, R36, G57–V59, G85–R88, and Q92. Positions G122–D159 are LID. Residues R123 and T132 to Y133 each bind ATP. Residues N138–D159 form a disordered region. R156 and R167 together coordinate AMP. ATP is bound at residue G207.

It belongs to the adenylate kinase family. As to quaternary structure, monomer.

It is found in the cytoplasm. The enzyme catalyses AMP + ATP = 2 ADP. Its pathway is purine metabolism; AMP biosynthesis via salvage pathway; AMP from ADP: step 1/1. Catalyzes the reversible transfer of the terminal phosphate group between ATP and AMP. Plays an important role in cellular energy homeostasis and in adenine nucleotide metabolism. The chain is Adenylate kinase from Cupriavidus taiwanensis (strain DSM 17343 / BCRC 17206 / CCUG 44338 / CIP 107171 / LMG 19424 / R1) (Ralstonia taiwanensis (strain LMG 19424)).